The following is a 543-amino-acid chain: Periplasmic oligopeptide-binding protein OppA (543 aa).

The first 26 residues, Met1 to Ala26, serve as a signal peptide directing secretion. A disulfide bond links Cys297 and Cys443.

This sequence belongs to the bacterial solute-binding protein 5 family. In terms of assembly, the complex is composed of two ATP-binding proteins (OppD and OppF), two transmembrane proteins (OppB and OppC) and a solute-binding protein (OppA).

It localises to the periplasm. Its function is as follows. Part of the ABC transporter complex OppABCDF involved in the uptake of oligopeptides. Plays an important nutritional role. Binds peptides containing from two to five amino acid residues. Displays a preference for tripeptides and tetrapeptides over dipeptides and pentapeptides, for peptides composed of L-amino acids and for positively charged peptides. Cannot bind the cell wall peptide L-Ala-D-Gly-gamma-meso-diaminopimelic acid. The polypeptide is Periplasmic oligopeptide-binding protein OppA (Escherichia coli (strain K12)).